Reading from the N-terminus, the 285-residue chain is Troponin T, cardiac muscle (285 aa).

A compositionally biased stretch (acidic residues) spans 1-58 (MSDVEEAVEEYEEQEEAAEEEHEEAVEEEAGGEAEAGEPCTAEDGEEEEGREAEDGPV). 2 disordered regions span residues 1 to 83 (MSDV…GERV) and 111 to 206 (RKKE…EKKK). An N-acetylserine modification is found at Ser-2. Phosphoserine; by CK2 is present on Ser-2. A compositionally biased stretch (pro residues) spans 66–77 (RPFMPNLVPPKI). 2 stretches are compositionally biased toward basic and acidic residues: residues 111-171 (RKKE…DEAR) and 190-206 (QTER…EKKK). Thr-191 is modified (phosphothreonine; by PKC/PRKCA). Phosphoserine; by PKC/PRKCA is present on Ser-195. Phosphothreonine; by PKC/PRKCA and RAF1 is present on Thr-200. Residue Thr-281 is modified to Phosphothreonine; by PKC/PRKCA.

This sequence belongs to the troponin T family. In terms of processing, the N-terminus is blocked. Post-translationally, phosphorylation at Thr-200 by PRKCA induces significant reduction in myofilament calcium sensitivity and actomyosin ATPase activity.

Troponin T is the tropomyosin-binding subunit of troponin, the thin filament regulatory complex which confers calcium-sensitivity to striated muscle actomyosin ATPase activity. This is Troponin T, cardiac muscle (TNNT2) from Bos taurus (Bovine).